A 78-amino-acid polypeptide reads, in one-letter code: Acyl carrier protein (78 aa).

Residues 1 to 76 (MSVAEKVKEI…DAISFIEKKK (76 aa)) form the Carrier domain. S36 is modified (O-(pantetheine 4'-phosphoryl)serine).

The protein belongs to the acyl carrier protein (ACP) family. 4'-phosphopantetheine is transferred from CoA to a specific serine of apo-ACP by AcpS. This modification is essential for activity because fatty acids are bound in thioester linkage to the sulfhydryl of the prosthetic group.

Its subcellular location is the cytoplasm. Its pathway is lipid metabolism; fatty acid biosynthesis. Functionally, carrier of the growing fatty acid chain in fatty acid biosynthesis. The sequence is that of Acyl carrier protein from Solidesulfovibrio magneticus (strain ATCC 700980 / DSM 13731 / RS-1) (Desulfovibrio magneticus).